The primary structure comprises 344 residues: N-acetyl-gamma-glutamyl-phosphate reductase (344 aa).

The active site involves C150.

It belongs to the NAGSA dehydrogenase family. Type 1 subfamily.

The protein localises to the cytoplasm. The catalysed reaction is N-acetyl-L-glutamate 5-semialdehyde + phosphate + NADP(+) = N-acetyl-L-glutamyl 5-phosphate + NADPH + H(+). Its pathway is amino-acid biosynthesis; L-arginine biosynthesis; N(2)-acetyl-L-ornithine from L-glutamate: step 3/4. Its function is as follows. Catalyzes the NADPH-dependent reduction of N-acetyl-5-glutamyl phosphate to yield N-acetyl-L-glutamate 5-semialdehyde. The sequence is that of N-acetyl-gamma-glutamyl-phosphate reductase from Pseudomonas savastanoi pv. phaseolicola (strain 1448A / Race 6) (Pseudomonas syringae pv. phaseolicola (strain 1448A / Race 6)).